Consider the following 512-residue polypeptide: PTS system mannitol-specific EIICB component (512 aa).

Residues 1-28 lie on the Cytoplasmic side of the membrane; that stretch reads MSQTEEKKGIGRRVQAFGSFLSSMIMPN. The 333-residue stretch at 17-349 folds into the PTS EIIC type-2 domain; sequence FGSFLSSMIM…MKFTREPKQD (333 aa). Residues 29-50 traverse the membrane as a helical segment; it reads IGAFIAWGFIAAIFIDNGWLPN. Residues 51–54 are Extracellular-facing; that stretch reads KDLA. The chain crosses the membrane as a helical span at residues 55-75; that stretch reads TLAGPMITYLIPLLIAFSGGR. Residues 76–139 lie on the Cytoplasmic side of the membrane; the sequence is LIYDLRGGII…QGFEMLFNNF (64 aa). The chain crosses the membrane as a helical span at residues 140–161; it reads SAGILGFIMTIAGFKILAPLMK. Residues 162–170 lie on the Extracellular side of the membrane; sequence FIMHILSVA. The chain crosses the membrane as a helical span at residues 171 to 191; that stretch reads VEALVHAHLLPLVSILVEPAK. The Cytoplasmic segment spans residues 192 to 278; sequence IVFLNNAINH…VLMRPLLFIA (87 aa). Residues 279–298 form a helical membrane-spanning segment; the sequence is VILGGMTGVATYQATGFGFK. At 299-318 the chain is on the extracellular side; sequence SPASPGSFIVYCLNAPRGEF. A helical transmembrane segment spans residues 319–340; it reads LHMLLGVFLAALVSFVVAALIM. At 341–512 the chain is on the cytoplasmic side; sequence KFTREPKQDL…LNNLKKDDQA (172 aa). A disordered region spans residues 355-402; that stretch reads AQMENTKGKKSSVASKLVSSDKNVNTEENASGNVSETSSSDDDPEALL. Low complexity predominate over residues 365-376; it reads SSVASKLVSSDK. Over residues 380-392 the composition is skewed to polar residues; it reads TEENASGNVSETS. The 94-residue stretch at 419 to 512 folds into the PTS EIIB type-2 domain; that stretch reads NHVIFACDAG…LNNLKKDDQA (94 aa). The active-site Phosphocysteine intermediate; for EIIB activity is the C425. C425 carries the phosphocysteine; by EIIA modification.

Homodimer.

Its subcellular location is the cell membrane. It carries out the reaction D-mannitol(out) + N(pros)-phospho-L-histidyl-[protein] = D-mannitol 1-phosphate(in) + L-histidyl-[protein]. The phosphoenolpyruvate-dependent sugar phosphotransferase system (sugar PTS), a major carbohydrate active transport system, catalyzes the phosphorylation of incoming sugar substrates concomitantly with their translocation across the cell membrane. The enzyme II CmtAB PTS system is involved in D-mannitol transport. The sequence is that of PTS system mannitol-specific EIICB component (mtlA) from Staphylococcus aureus (strain Mu50 / ATCC 700699).